Here is a 616-residue protein sequence, read N- to C-terminus: Dihydroxy-acid dehydratase (616 aa).

Asp81 contacts Mg(2+). Residue Cys122 coordinates [2Fe-2S] cluster. Positions 123 and 124 each coordinate Mg(2+). The residue at position 124 (Lys124) is an N6-carboxylysine. Cys195 lines the [2Fe-2S] cluster pocket. Glu491 provides a ligand contact to Mg(2+). Catalysis depends on Ser517, which acts as the Proton acceptor.

The protein belongs to the IlvD/Edd family. Homodimer. It depends on [2Fe-2S] cluster as a cofactor. Mg(2+) is required as a cofactor.

The catalysed reaction is (2R)-2,3-dihydroxy-3-methylbutanoate = 3-methyl-2-oxobutanoate + H2O. It carries out the reaction (2R,3R)-2,3-dihydroxy-3-methylpentanoate = (S)-3-methyl-2-oxopentanoate + H2O. Its pathway is amino-acid biosynthesis; L-isoleucine biosynthesis; L-isoleucine from 2-oxobutanoate: step 3/4. It participates in amino-acid biosynthesis; L-valine biosynthesis; L-valine from pyruvate: step 3/4. Functionally, functions in the biosynthesis of branched-chain amino acids. Catalyzes the dehydration of (2R,3R)-2,3-dihydroxy-3-methylpentanoate (2,3-dihydroxy-3-methylvalerate) into 2-oxo-3-methylpentanoate (2-oxo-3-methylvalerate) and of (2R)-2,3-dihydroxy-3-methylbutanoate (2,3-dihydroxyisovalerate) into 2-oxo-3-methylbutanoate (2-oxoisovalerate), the penultimate precursor to L-isoleucine and L-valine, respectively. The polypeptide is Dihydroxy-acid dehydratase (Salmonella paratyphi C (strain RKS4594)).